The sequence spans 186 residues: Heat shock protein 23 (186 aa).

The sHSP domain occupies 53-161; that stretch reads VGASSGSSGA…KGNERIVQIQ (109 aa). The disordered stretch occupies residues 163 to 186; the sequence is VGPAHLNVKENPKEAVEQDNGNDK. Residues 169 to 186 show a composition bias toward basic and acidic residues; it reads NVKENPKEAVEQDNGNDK.

It belongs to the small heat shock protein (HSP20) family.

The polypeptide is Heat shock protein 23 (Hsp23) (Drosophila melanogaster (Fruit fly)).